Here is a 162-residue protein sequence, read N- to C-terminus: uncharacterized protein (162 aa).

The next 3 membrane-spanning stretches (helical) occupy residues 7–27 (LIAD…IVGL), 51–71 (LSIL…YMIG), and 134–154 (TYVA…ITIG).

This sequence belongs to the DedA family.

The protein resides in the cell membrane. This is an uncharacterized protein from Bacillus subtilis (strain 168).